Here is a 338-residue protein sequence, read N- to C-terminus: Citramalyl-CoA lyase, mitochondrial (338 aa).

Residues 1–20 constitute a mitochondrion transit peptide; it reads MALCVLQNAVRGAAALPRLK. Substrate is bound by residues tyrosine 48, lysine 55, and lysine 59. N6-acetyllysine is present on residues lysine 55, lysine 59, and lysine 64. 2 positions are modified to N6-acetyllysine; alternate: lysine 80 and lysine 90. Residues lysine 80 and lysine 90 each carry the N6-succinyllysine; alternate modification. Arginine 105 serves as a coordination point for substrate. Mg(2+) contacts are provided by glutamate 169 and aspartate 204. 270–271 provides a ligand contact to substrate; that stretch reads IH. Lysine 307 bears the N6-succinyllysine mark. Aspartate 318 is an active-site residue.

The protein belongs to the HpcH/HpaI aldolase family. Citrate lyase beta subunit-like subfamily. As to quaternary structure, homotrimer. Mg(2+) serves as cofactor.

The protein localises to the mitochondrion. It catalyses the reaction glyoxylate + acetyl-CoA + H2O = (S)-malate + CoA + H(+). It carries out the reaction propanoyl-CoA + glyoxylate + H2O = 3-methylmalate + CoA + H(+). The enzyme catalyses (3S)-citramalyl-CoA = pyruvate + acetyl-CoA. The catalysed reaction is (S)-malyl-CoA + H2O = (S)-malate + CoA + H(+). Its function is as follows. Mitochondrial citramalyl-CoA lyase indirectly involved in the vitamin B12 metabolism. Converts citramalyl-CoA into acetyl-CoA and pyruvate in the C5-dicarboxylate catabolism pathway. The C5-dicarboxylate catabolism pathway is required to detoxify itaconate, a vitamin B12-poisoning metabolite. Also acts as a malate synthase in vitro, converting glyoxylate and acetyl-CoA to malate. Also displays malyl-CoA thioesterase activity. Also acts as a beta-methylmalate synthase in vitro, by mediating conversion of glyoxylate and propionyl-CoA to beta-methylmalate. Also has very weak citramalate synthase activity in vitro. This is Citramalyl-CoA lyase, mitochondrial (Clybl) from Rattus norvegicus (Rat).